Here is a 353-residue protein sequence, read N- to C-terminus: Peroxidase C1A (353 aa).

The signal sequence occupies residues 1–30; sequence MHFSSSSTLFTCITLIPLVCLILHASLSDA. Glutamine 31 is modified (pyrrolidone carboxylic acid). 4 disulfide bridges follow: cysteine 41–cysteine 121, cysteine 74–cysteine 79, cysteine 127–cysteine 331, and cysteine 207–cysteine 239. Residue asparagine 43 is glycosylated (N-linked (GlcNAc...) asparagine). Histidine 72 serves as the catalytic Proton acceptor. Ca(2+) is bound by residues aspartate 73, valine 76, glycine 78, aspartate 80, and serine 82. Asparagine 87 carries an N-linked (GlcNAc...) asparagine glycan. Glutamate 94 is a binding site for Ca(2+). A substrate-binding site is contributed by proline 169. A glycan (N-linked (GlcNAc...) asparagine) is linked at asparagine 188. Histidine 200 contributes to the heme b binding site. Residue threonine 201 coordinates Ca(2+). Residues asparagine 216, asparagine 228, and asparagine 244 are each glycosylated (N-linked (GlcNAc...) asparagine). The Ca(2+) site is built by aspartate 252, threonine 255, and aspartate 260. N-linked (GlcNAc...) asparagine glycans are attached at residues asparagine 285 and asparagine 298. The propeptide occupies 339–353; the sequence is LLHDMVEVVDFVSSM.

The protein belongs to the peroxidase family. Classical plant (class III) peroxidase subfamily. Monomer. The cofactor is Ca(2+). Requires heme b as cofactor.

The protein resides in the secreted. The protein localises to the vacuole. The catalysed reaction is 2 a phenolic donor + H2O2 = 2 a phenolic radical donor + 2 H2O. In terms of biological role, removal of H(2)O(2), oxidation of toxic reductants, biosynthesis and degradation of lignin, suberization, auxin catabolism, response to environmental stresses such as wounding, pathogen attack and oxidative stress. These functions might be dependent on each isozyme/isoform in each plant tissue. The sequence is that of Peroxidase C1A (PRXC1A) from Armoracia rusticana (Horseradish).